Consider the following 310-residue polypeptide: Transcription initiation factor IIA subunit 1 (310 aa).

Disordered regions lie at residues 52 to 78 (AISN…LSTV), 91 to 197 (IQLN…NNKD), and 218 to 261 (VIPQ…DDPD). Low complexity-rich tracts occupy residues 62 to 77 (TTAT…TLST) and 122 to 160 (SNGT…PSSL). Composition is skewed to acidic residues over residues 173 to 183 (TLDESDNDDDN), 225 to 236 (LNDDDDLDDEEI), and 246 to 261 (DSLG…DDPD).

This sequence belongs to the TFIIA subunit 1 family. In terms of assembly, TFIIA is a heterodimer of the large subunit 1 and a small subunit gamma.

It is found in the nucleus. Functionally, TFIIA is a component of the transcription machinery of RNA polymerase II and plays an important role in transcriptional activation. TFIIA in a complex with tbp mediates transcriptional activity. This chain is Transcription initiation factor IIA subunit 1 (gtf2a1), found in Dictyostelium discoideum (Social amoeba).